A 366-amino-acid chain; its full sequence is Terpene cyclase atmA (366 aa).

A run of 8 helical transmembrane segments spans residues 9 to 29, 84 to 104, 113 to 133, 162 to 182, 195 to 215, 233 to 253, 291 to 311, and 333 to 353; these read FLLL…NNGF, LTGL…VVHI, GMVI…GIVI, GLVV…SLPA, IAAW…HHLF, VYHF…SAFV, AGLF…TMVW, and ILRL…VRLI.

This sequence belongs to the membrane-bound ascI terpene cyclase family.

It localises to the membrane. Functionally, aflatrem synthesis protein A; part of the ATM2 gene cluster that mediates the biosynthesis of aflatrem, a tremorgenic mycotoxin with acute neurotoxic effects. Synthesis of geranylgeranyl diphosphate (GGPP) by AtmG (a GGPP synthase) precedes condensation of GGPP with indole 3-glycerol phosphate, followed by epoxidation and cyclization by AtmM (a FAD-dependent monooxygenase) and AtmC (a prenyltransferase) to produce paspaline. AtmB is also essential for paspaline production, but its exact role has not been identified yet. AtmP, a cytochrome P450 monooxygenase, subsequently converts paspaline to 13-desoxypaxilline via PC-M6 by removal of the C-30 methyl group and oxidation at C-10. AtmQ, a cytochrome P450 monooxygenase, then catalyzes the oxidation of 13-desoxypaxilline, first at C-7 to produce paspalicine and then at C-13 to form paspalinine. Finally, AtmD prenylates paspalinine to form aflatrem. The role of atmA in the aflatrem biosynthesis is still unknown. This chain is Terpene cyclase atmA, found in Aspergillus flavus.